A 473-amino-acid polypeptide reads, in one-letter code: Ribulose bisphosphate carboxylase large chain (473 aa).

Residues Asn116 and Thr166 each coordinate substrate. Lys168 functions as the Proton acceptor in the catalytic mechanism. Lys170 is a binding site for substrate. 3 residues coordinate Mg(2+): Lys194, Asp196, and Glu197. Lys194 is modified (N6-carboxylysine). His287 (proton acceptor) is an active-site residue. Substrate-binding residues include Arg288, His320, and Ser372.

This sequence belongs to the RuBisCO large chain family. Type I subfamily. Heterohexadecamer of 8 large chains and 8 small chains. Mg(2+) is required as a cofactor.

It catalyses the reaction 2 (2R)-3-phosphoglycerate + 2 H(+) = D-ribulose 1,5-bisphosphate + CO2 + H2O. The catalysed reaction is D-ribulose 1,5-bisphosphate + O2 = 2-phosphoglycolate + (2R)-3-phosphoglycerate + 2 H(+). Its function is as follows. RuBisCO catalyzes two reactions: the carboxylation of D-ribulose 1,5-bisphosphate, the primary event in carbon dioxide fixation, as well as the oxidative fragmentation of the pentose substrate. Both reactions occur simultaneously and in competition at the same active site. This chain is Ribulose bisphosphate carboxylase large chain, found in Hydrogenophaga pseudoflava (Pseudomonas carboxydoflava).